The primary structure comprises 972 residues: MAAGFFISKSVGIVGIVLALGAVATIIALSVVYAQEKNKSSGGSGGSDTTSTTTASTTTTSTTTASTTAAPNNPWNRWRLPTALKPESYEVTLQPFLTPDDNNMYIFKGNSSVVFLCEEATDLILIHSNKLNYTLQGGFHASLHAVNGSTPPTISNTWLETNTQYLVLQLAGPLQQGQHYRLFSIFTGELADDLAGFYRSEYTEGNVTKVVATTQMQAPDARKAFPCFDEPAMKAVFTVTMIHPSDHTAISNMPVHSTYQLQMDGQSWNVTQFDPTPRMSTYLLAFIVSQFDYVENNTGKVQIRIWGRPAAIAEGQGEYALEKTGPILSFFERHYNTAYPLPKSDQVGLPDFNAGAMENWGLVTYRENSLLYDNAYSSIGNKERVVTVIAHELAHQWFGNLVTLRWWNDLWLNEGFASYVEYLGADSAEPTWDIKDLMVLNELYTVMATDALTTSHPLTFREDEINTPAQISEVFDSIAYSKGASVLRMLSDFLTEDVFKEGLQSYLHDFSYNNTVYTDLWDHLQEAVNKNSVPLPDSIGAIMDRWTLQMGFPVVTVNTLTGSVQQSHFLLDSNSTVERPSVFNYTWIVPITWMTPSRTGDRYWLVDVSATNSDFSVGSSTWLLLNLNVSGYFRVNYNQENWDQLLQQLSNNHQAIPVINRAQIIDDAFNLARAQQVSVTLALNTTRFLSGETAYMPWQAALNNLQYFQLMFDRSEVFGAMTKYIQKQVTPLFEYYRTATNNWTAIPSALMDQYNEINAISTACSYGIAECQQLATALYQQWRQNVSNNPIAPNLRSAIYCSAVATGGEEVWDFIWERFLEAPVVSEADKLRTALTCSTETWILQRYLQYTIDPTKIRKQDATSTINSIASNVVGQPLAWDFIRSNWRTLFGQYGGGSFSFSRLISAVTQRFNTEFELKQLEQFKADNQDIGFGSGTRALEQALERTRTNINWVKENKEVVHAWFRAETASS.

Residues 2-10 (AAGFFISKS) are Cytoplasmic-facing. Residues 11 to 31 (VGIVGIVLALGAVATIIALSV) form a helical; Signal-anchor for type II membrane protein membrane-spanning segment. Topologically, residues 32 to 972 (VYAQEKNKSS…AWFRAETASS (941 aa)) are extracellular. Positions 33–72 (YAQEKNKSSGGSGGSDTTSTTTASTTTTSTTTASTTAAPN) are cytosolic Ser/Thr-rich junction. A disordered region spans residues 37 to 77 (KNKSSGGSGGSDTTSTTTASTTTTSTTTASTTAAPNNPWNR). An N-linked (GlcNAc...) asparagine glycan is attached at Asn38. Low complexity predominate over residues 47–70 (SDTTSTTTASTTTTSTTTASTTAA). Positions 73–967 (NPWNRWRLPT…KEVVHAWFRA (895 aa)) are metalloprotease. N-linked (GlcNAc...) asparagine glycosylation is found at Asn110, Asn132, Asn147, Asn206, Asn269, and Asn296. 355 to 359 (GAMEN) serves as a coordination point for substrate. Residue His391 participates in Zn(2+) binding. Glu392 functions as the Proton acceptor in the catalytic mechanism. The Zn(2+) site is built by His395 and Glu414. N-linked (GlcNAc...) asparagine glycosylation is found at Asn513, Asn574, Asn584, Asn628, Asn684, and Asn742. A disulfide bond links Cys764 and Cys771. N-linked (GlcNAc...) asparagine glycosylation occurs at Asn785. A disulfide bond links Cys801 and Cys837.

It belongs to the peptidase M1 family. In terms of assembly, homodimer. Zn(2+) serves as cofactor. Detected in the plasma and granule fractions of egg yolk (at protein level).

It localises to the cell membrane. The enzyme catalyses Differs from other aminopeptidases in broad specificity for amino acids in the P1 position and the ability to hydrolyze peptides of four or five residues that contain Pro in the P1' position.. Functionally, broad specificity aminopeptidase. Degrades a variety of peptides possessing various N-terminal amino acids including hydrophobic, basic and acidic amino acids. Preferentially hydrolyzes small peptides consisting of 4 or 5 amino acids. Hydrolyzes the N-terminal Xaa-Pro bonds in the chicken brain peptide Leu-Pro-Leu-Arg-PheNH2, the substance P fragment Arg-Pro-Lys-Pro and the bradykinin fragment Arg-Pro-Pro-Gly-Phe. Hydrolyzes the N-formylated peptides fMet-Leu-Phe, fMet-Ala-Gly-Ser-Glu and fMet-Nle-Leu-Phe-Nle-Tyr-Lys, but does not hydrolyze peptides with acetylation or pyroglutamic acid at N-terminus. Does not hydrolyze large peptides such as complete substance P, bradykinin or schistoFLRFamide. This is Aminopeptidase Ey (ANPEP) from Gallus gallus (Chicken).